The primary structure comprises 284 residues: Putative ABC transporter ATP-binding protein sll0385 (284 aa).

Residues Ile51–Glu278 form the ABC transporter domain. Gly84–Thr91 contributes to the ATP binding site.

Belongs to the ABC transporter superfamily.

The protein localises to the cell inner membrane. In terms of biological role, probably part of an ABC transporter complex. Responsible for energy coupling to the transport system. In Synechocystis sp. (strain ATCC 27184 / PCC 6803 / Kazusa), this protein is Putative ABC transporter ATP-binding protein sll0385.